A 375-amino-acid chain; its full sequence is Zinc finger CCCH domain-containing protein 57 (375 aa).

C3H1-type zinc fingers lie at residues 42-70 (RHGE…HPHD), 87-115 (RIGQ…HPRN), 133-161 (RPNE…HPQT), 243-271 (RPGQ…HPRD), and 289-317 (RPGE…HPMR). The segment at 352–375 (SVEAKPTSLPETTSAKDTIVDAQH) is disordered.

The protein localises to the nucleus. The chain is Zinc finger CCCH domain-containing protein 57 (ZFN3) from Arabidopsis thaliana (Mouse-ear cress).